The sequence spans 190 residues: Thiamine biosynthesis protein X (190 aa).

An N-terminal signal peptide occupies residues 1 to 22 (MSISRTVFGIAATAALSAALVA). Residue C23 is the site of N-palmitoyl cysteine attachment. Residue C23 is the site of S-diacylglycerol cysteine attachment. The segment at 43–68 (SQNPTSASSTSTSSATTTSSAPVEED) is disordered. The segment covering 47–63 (TSASSTSTSSATTTSSA) has biased composition (low complexity).

Its subcellular location is the cell membrane. Its function is as follows. Is necessary for biosynthesis of the 4-methyl-5-(beta-hydroxyethyl)thiazol component from which thiamine is formed. This Corynebacterium glutamicum (strain ATCC 13032 / DSM 20300 / JCM 1318 / BCRC 11384 / CCUG 27702 / LMG 3730 / NBRC 12168 / NCIMB 10025 / NRRL B-2784 / 534) protein is Thiamine biosynthesis protein X (thiX).